The chain runs to 309 residues: MSIRIVPKDQLGKQSEKGTTAGNIPPLLFANLKSLYTRRTERLQQLALDNPLADYLDFAAKITQAQQKALHDHPLVLDMQAELAQSAASGKPPLDLSVFPRTDHWRKLLSALIAELRHDAPDHIVAVLDNLDKASVHELELYADALLNREFAQIGSEKAPFIWAALSLYWAQMASQIPGKARAEYGEHRQFCPVCGSIPVSSVVHIGTQNGLRYLHCNLCESEWHVVRIKCSNCEQTRDLNYWSLDTELAAVKAESCGDCGTYLKILYQEKDPMVEAVADDLASLILDAKMEGEGFARSSINPFLFPGE.

Belongs to the FdhE family.

The protein resides in the cytoplasm. In terms of biological role, necessary for formate dehydrogenase activity. The chain is Protein FdhE homolog from Yersinia enterocolitica serotype O:8 / biotype 1B (strain NCTC 13174 / 8081).